The sequence spans 340 residues: uncharacterized protein (340 aa).

The RING-CH-type zinc finger occupies 6 to 70; that stretch reads KYEKSSARCW…PQCLTAYRIA (65 aa). Residues Cys14, Cys17, Cys37, Cys39, His44, Cys47, Cys60, and Cys63 each coordinate Zn(2+). The next 3 membrane-spanning stretches (helical) occupy residues 249–269, 274–294, and 300–320; these read EFWI…TKIL, PILL…GNFT, and IIGA…FIAW.

It is found in the membrane. This is an uncharacterized protein from Schizosaccharomyces pombe (strain 972 / ATCC 24843) (Fission yeast).